The following is a 290-amino-acid chain: Sodium/potassium-transporting ATPase subunit beta-2 (290 aa).

The Cytoplasmic portion of the chain corresponds to 1–39 (MVIQKEKKSCGQVVEEWKEFVWNPRTHQFMGRTGTSWAF). A helical; Signal-anchor for type II membrane protein membrane pass occupies residues 40–67 (ILLFYLVFYGFLTAMFTLTMWVMLQTVS). Over 68 to 290 (DHTPKYQDRL…VAFKLRINKT (223 aa)) the chain is Extracellular. N-linked (GlcNAc...) asparagine glycosylation is found at N96 and N118. C129 and C150 form a disulfide bridge. A glycan (N-linked (GlcNAc...) asparagine) is linked at N153. An intrachain disulfide couples C160 to C177. Residues N193, N197, and N238 are each glycosylated (N-linked (GlcNAc...) asparagine). The immunoglobulin-like stretch occupies residues 193–289 (NQSMNVTCVG…RVAFKLRINK (97 aa)). A disulfide bridge links C200 with C261.

This sequence belongs to the X(+)/potassium ATPases subunit beta family. The sodium/potassium-transporting ATPase is composed of a catalytic alpha subunit, an auxiliary non-catalytic beta subunit and an additional regulatory subunit. Interacts with BSG.

It is found in the cell membrane. In terms of biological role, this is the non-catalytic component of the active enzyme, which catalyzes the hydrolysis of ATP coupled with the exchange of Na(+) and K(+) ions across the plasma membrane. The exact function of the beta-2 subunit is not known. Mediates cell adhesion of neurons and astrocytes, and promotes neurite outgrowth. This chain is Sodium/potassium-transporting ATPase subunit beta-2 (ATP1B2), found in Bos taurus (Bovine).